Consider the following 303-residue polypeptide: Recombination-associated protein RdgC (303 aa).

Belongs to the RdgC family.

Its subcellular location is the cytoplasm. It is found in the nucleoid. Its function is as follows. May be involved in recombination. The polypeptide is Recombination-associated protein RdgC (Salmonella agona (strain SL483)).